The sequence spans 350 residues: tRNA U34 carboxymethyltransferase (350 aa).

Carboxy-S-adenosyl-L-methionine contacts are provided by residues Lys-101, Trp-125, Lys-130, Gly-150, 172–174 (DPS), 208–209 (LE), Met-224, Tyr-228, and Arg-343.

This sequence belongs to the class I-like SAM-binding methyltransferase superfamily. CmoB family. As to quaternary structure, homotetramer.

The enzyme catalyses carboxy-S-adenosyl-L-methionine + 5-hydroxyuridine(34) in tRNA = 5-carboxymethoxyuridine(34) in tRNA + S-adenosyl-L-homocysteine + H(+). Functionally, catalyzes carboxymethyl transfer from carboxy-S-adenosyl-L-methionine (Cx-SAM) to 5-hydroxyuridine (ho5U) to form 5-carboxymethoxyuridine (cmo5U) at position 34 in tRNAs. The sequence is that of tRNA U34 carboxymethyltransferase from Psychrobacter arcticus (strain DSM 17307 / VKM B-2377 / 273-4).